The chain runs to 458 residues: MAKAPKTAYVCNDCGAEFSRWQGQCSACKAWNTITEVRLISTAKSKNDRFSGYAGETQAKIQTLSEISLQETPRFSSGFSELDRVLGGGIVPGSAILIGGHPGAGKSTLLLQVMCGLAKNMTALYVTGEESLQQVAMRASRLGLPSDQLKMLSETSVEQICNLADQLKPQIIVVDSIQVMHLADIQSSPGSVAQVRECASFLTRYAKTRQVAIIMVGHVTKDGTLAGPKVLEHAIDCSLLLEGEADSRYRTLRSHKNRFGAVNELGVFGMTEQGLREVKNPSAIFLSRGDEITSGSSVMVLWEGTRPLLVEIQALVDHSMLANPRRVAVGLEQNRLALLLAVLHRHGGLQMADQDVFVNVVGGVKVSETSADLALLLALISSFRNRPLPQDLVIFGEVGLAGEIRPVPSGQERISEAAKHGFKRAIVPFGNKPKSAVENMQVFTVKKLTDALAVLDNL.

The C4-type zinc finger occupies 11–28; it reads CNDCGAEFSRWQGQCSAC. Residue 100-107 participates in ATP binding; it reads GHPGAGKS. The RadA KNRFG motif motif lies at 256 to 260; it reads KNRFG. Positions 355–458 are lon-protease-like; it reads DVFVNVVGGV…TDALAVLDNL (104 aa).

Belongs to the RecA family. RadA subfamily.

In terms of biological role, DNA-dependent ATPase involved in processing of recombination intermediates, plays a role in repairing DNA breaks. Stimulates the branch migration of RecA-mediated strand transfer reactions, allowing the 3' invading strand to extend heteroduplex DNA faster. Binds ssDNA in the presence of ADP but not other nucleotides, has ATPase activity that is stimulated by ssDNA and various branched DNA structures, but inhibited by SSB. Does not have RecA's homology-searching function. The sequence is that of DNA repair protein RadA from Haemophilus influenzae (strain ATCC 51907 / DSM 11121 / KW20 / Rd).